We begin with the raw amino-acid sequence, 591 residues long: Nuclear receptor subfamily 4 group A member 2 (591 aa).

2 disordered regions span residues 1–22 (MPCVQAQYGSSPQGASPASQSY) and 110–133 (SEEMMSHSGSVYYKPSSPPTSSTP). Residues 8-22 (YGSSPQGASPASQSY) are compositionally biased toward low complexity. Positions 253–328 (EGLCAVCGDN…VGMVKEVVRT (76 aa)) form a DNA-binding region, nuclear receptor. NR C4-type zinc fingers lie at residues 256-276 (CAVCGDNAACQHYGVRTCEGC) and 292-311 (CLANKNCPVDKRRRNRCQYC). The short motif at 280 to 307 (FKRTVQKNAKYVCLANKNCPVDKRRRNR) is the Bipartite nuclear localization signal (NLS1) element. The interval 330 to 354 (SLKGRRGRLPSKPKSPQEPSPPSPP) is disordered. The Nuclear localization signal (NLS1) motif lies at 331 to 343 (LKGRRGRLPSKPK). Positions 345–354 (PQEPSPPSPP) are enriched in pro residues. The NR LBD domain maps to 353-588 (PPVSLISALV…AIIDKLFLDT (236 aa)). The nuclear export sequence (NES1) motif lies at 436–445 (FLELFVLRLA). The nuclear export sequence (NES2) signature appears at 561-570 (QGLQRIFYLK).

It belongs to the nuclear hormone receptor family.

Its subcellular location is the cytoplasm. The protein localises to the nucleus. In terms of biological role, transcriptional regulator which may play a role in the differentiation and maintenance of meso-diencephalic dopaminergic (mdDA) neurons. In Xenopus tropicalis (Western clawed frog), this protein is Nuclear receptor subfamily 4 group A member 2 (nr4a2).